Reading from the N-terminus, the 198-residue chain is Na(+)-translocating NADH-quinone reductase subunit E (198 aa).

Helical transmembrane passes span 11-31 (SVFIENMALSFFLGMCTFLAV), 35-55 (VSTAFGLGIAVIVVLGIAVPV), 77-97 (FLNFITFIGVIAALVQILEMV), 110-130 (GIFLPLITVNCAIFGGVSFMV), 140-160 (VVYGIGAGTGWMLAIVALAGI), and 176-196 (LGITFITVGLMALGFMSFSGI).

The protein belongs to the NqrDE/RnfAE family. In terms of assembly, composed of six subunits; NqrA, NqrB, NqrC, NqrD, NqrE and NqrF.

Its subcellular location is the cell inner membrane. It carries out the reaction a ubiquinone + n Na(+)(in) + NADH + H(+) = a ubiquinol + n Na(+)(out) + NAD(+). Its function is as follows. NQR complex catalyzes the reduction of ubiquinone-1 to ubiquinol by two successive reactions, coupled with the transport of Na(+) ions from the cytoplasm to the periplasm. NqrA to NqrE are probably involved in the second step, the conversion of ubisemiquinone to ubiquinol. This Pasteurella multocida (strain Pm70) protein is Na(+)-translocating NADH-quinone reductase subunit E.